A 455-amino-acid polypeptide reads, in one-letter code: Phosphoglucosamine mutase (455 aa).

Serine 102 acts as the Phosphoserine intermediate in catalysis. Positions 102, 241, 243, and 245 each coordinate Mg(2+). At serine 102 the chain carries Phosphoserine.

It belongs to the phosphohexose mutase family. Mg(2+) serves as cofactor. In terms of processing, activated by phosphorylation.

It carries out the reaction alpha-D-glucosamine 1-phosphate = D-glucosamine 6-phosphate. Catalyzes the conversion of glucosamine-6-phosphate to glucosamine-1-phosphate. This Legionella pneumophila (strain Lens) protein is Phosphoglucosamine mutase.